Consider the following 1131-residue polypeptide: DNA-directed RNA polymerase subunit beta (1131 aa).

The tract at residues 1108–1131 (QLARRTPPRPTYESLSRESLDDDE) is disordered. Residues 1122–1131 (LSRESLDDDE) are compositionally biased toward basic and acidic residues.

It belongs to the RNA polymerase beta chain family. As to quaternary structure, in cyanobacteria the RNAP catalytic core is composed of 2 alpha, 1 beta, 1 beta', 1 gamma and 1 omega subunit. When a sigma factor is associated with the core the holoenzyme is formed, which can initiate transcription.

It carries out the reaction RNA(n) + a ribonucleoside 5'-triphosphate = RNA(n+1) + diphosphate. DNA-dependent RNA polymerase catalyzes the transcription of DNA into RNA using the four ribonucleoside triphosphates as substrates. This is DNA-directed RNA polymerase subunit beta from Nostoc sp. (strain PCC 7120 / SAG 25.82 / UTEX 2576).